The primary structure comprises 142 residues: MAKEFSRTRRIAQQLQQELAQVLQRDMKDPRIGFVTVNDVDVSRDLSYAKVYVTFFEEDEKLVEQKVAALDAAAGYIRSLVAGRMKLRVMPELRFIYDSSLVEGMRMSNLVSRVISNDEAKQKQHGVETDAEQGETKDEGDK.

The tract at residues 119–142 (EAKQKQHGVETDAEQGETKDEGDK) is disordered.

This sequence belongs to the RbfA family. Monomer. Binds 30S ribosomal subunits, but not 50S ribosomal subunits or 70S ribosomes.

The protein resides in the cytoplasm. In terms of biological role, one of several proteins that assist in the late maturation steps of the functional core of the 30S ribosomal subunit. Associates with free 30S ribosomal subunits (but not with 30S subunits that are part of 70S ribosomes or polysomes). Required for efficient processing of 16S rRNA. May interact with the 5'-terminal helix region of 16S rRNA. In Shewanella halifaxensis (strain HAW-EB4), this protein is Ribosome-binding factor A.